The following is a 334-amino-acid chain: ABC transporter L-arabinose-binding periplasmic protein (334 aa).

An N-terminal signal peptide occupies residues 1–30 (MNRTIRRHTLRALLAALCIAPLGMQGAARA).

It belongs to the bacterial solute-binding protein 2 family. In terms of assembly, the complex is composed of two ATP-binding proteins (AraG), two transmembrane proteins (AraH) and a solute-binding protein (AraF).

The protein localises to the periplasm. Part of the ABC transporter complex AraFGH involved in L-arabinose import. Binds with high affinity to L-arabinose. This Azospirillum brasilense protein is ABC transporter L-arabinose-binding periplasmic protein (araF).